The sequence spans 31 residues: Cytochrome b6-f complex subunit 6 (31 aa).

A helical transmembrane segment spans residues 4 to 24; the sequence is LTSYFGFLLAALTITSVLFIG.

This sequence belongs to the PetL family. As to quaternary structure, the 4 large subunits of the cytochrome b6-f complex are cytochrome b6, subunit IV (17 kDa polypeptide, PetD), cytochrome f and the Rieske protein, while the 4 small subunits are PetG, PetL, PetM and PetN. The complex functions as a dimer.

It is found in the plastid. Its subcellular location is the chloroplast thylakoid membrane. Component of the cytochrome b6-f complex, which mediates electron transfer between photosystem II (PSII) and photosystem I (PSI), cyclic electron flow around PSI, and state transitions. PetL is important for photoautotrophic growth as well as for electron transfer efficiency and stability of the cytochrome b6-f complex. The chain is Cytochrome b6-f complex subunit 6 from Silene conica (Striped corn catchfly).